A 620-amino-acid polypeptide reads, in one-letter code: Coenzyme F420-dependent sulfite reductase (620 aa).

Positions Leu6–Arg35 constitute a 4Fe-4S ferredoxin-type 1 domain. 16 residues coordinate [4Fe-4S] cluster: Cys15, Cys18, Cys21, Cys25, Cys428, Cys434, Cys468, Cys472, Cys495, Cys498, Cys501, Cys505, Cys524, Cys527, Cys530, and Cys534. Cys472 contacts siroheme. 4Fe-4S ferredoxin-type domains are found at residues Lys486–Glu515 and Asn520–Glu544.

This sequence belongs to the nitrite and sulfite reductase 4Fe-4S domain family. [4Fe-4S] cluster is required as a cofactor. Requires siroheme as cofactor.

The catalysed reaction is 3 oxidized coenzyme F420-(gamma-L-Glu)(n) + hydrogen sulfide + 3 H2O + 2 H(+) = 3 reduced coenzyme F420-(gamma-L-Glu)(n) + sulfite. In terms of biological role, catalyzes the reduction of sulfite to sulfide using reduced F420 as the electron source. Involved in sulfite detoxification and assimilation. Cannot use NADH or NADPH. This chain is Coenzyme F420-dependent sulfite reductase, found in Methanocaldococcus jannaschii (strain ATCC 43067 / DSM 2661 / JAL-1 / JCM 10045 / NBRC 100440) (Methanococcus jannaschii).